A 137-amino-acid chain; its full sequence is MLSPKRTRFRKQHRGKLKGISYRGNHICFGRYALQALEPAWLTSRQIEAGRRAMTRNARRGGKIWVRIFPDKPVTVRPAETRMGSGKGCPEYWVAVVKPGRILYEMGGVTKKIARRAFSIAASKMPIRTQFIISEIE.

It belongs to the universal ribosomal protein uL16 family. In terms of assembly, part of the 50S ribosomal subunit.

It is found in the plastid. This is Large ribosomal subunit protein uL16c from Cuscuta exaltata (Tall dodder).